The sequence spans 416 residues: UDP-N-acetylglucosamine 1-carboxyvinyltransferase (416 aa).

22–23 (KN) is a phosphoenolpyruvate binding site. UDP-N-acetyl-alpha-D-glucosamine is bound at residue R92. C116 acts as the Proton donor in catalysis. Residue C116 is modified to 2-(S-cysteinyl)pyruvic acid O-phosphothioketal. 2 residues coordinate UDP-N-acetyl-alpha-D-glucosamine: D306 and I328.

It belongs to the EPSP synthase family. MurA subfamily.

The protein resides in the cytoplasm. The catalysed reaction is phosphoenolpyruvate + UDP-N-acetyl-alpha-D-glucosamine = UDP-N-acetyl-3-O-(1-carboxyvinyl)-alpha-D-glucosamine + phosphate. It participates in cell wall biogenesis; peptidoglycan biosynthesis. In terms of biological role, cell wall formation. Adds enolpyruvyl to UDP-N-acetylglucosamine. This chain is UDP-N-acetylglucosamine 1-carboxyvinyltransferase, found in Buchnera aphidicola subsp. Baizongia pistaciae (strain Bp).